Consider the following 513-residue polypeptide: ATP synthase subunit alpha (513 aa).

170-177 serves as a coordination point for ATP; that stretch reads GDRQTGKT.

Belongs to the ATPase alpha/beta chains family. As to quaternary structure, F-type ATPases have 2 components, CF(1) - the catalytic core - and CF(0) - the membrane proton channel. CF(1) has five subunits: alpha(3), beta(3), gamma(1), delta(1), epsilon(1). CF(0) has four main subunits: a(1), b(1), b'(1) and c(9-12).

Its subcellular location is the cell inner membrane. The catalysed reaction is ATP + H2O + 4 H(+)(in) = ADP + phosphate + 5 H(+)(out). Produces ATP from ADP in the presence of a proton gradient across the membrane. The alpha chain is a regulatory subunit. The sequence is that of ATP synthase subunit alpha from Gloeobacter violaceus (strain ATCC 29082 / PCC 7421).